Reading from the N-terminus, the 581-residue chain is Multidrug resistance-like ATP-binding protein MdlA (581 aa).

Positions 18 to 303 (YLGSIILLII…LAWMFNIVER (286 aa)) constitute an ABC transmembrane type-1 domain. A run of 6 helical transmembrane segments spans residues 23-43 (ILLIIIAFLQLLPPKIIGILI), 53-73 (GFEILPWISIILLIAIIVYIL), 127-149 (VVFAAGEGVLTLVDSSVMGISVL), 153-175 (ITQISWLLTIISLIPMPIMAILI), 247-267 (VIYLSVAFSNLLAITAGGWLV), and 280-300 (FIMYLGLMIWPMLALAWMFNI). Residues 337–571 (INIDMFFYPK…KNWYKSMYDH (235 aa)) enclose the ABC transporter domain. 369–376 (GPTGAGKS) is a binding site for ATP.

This sequence belongs to the ABC transporter superfamily. Drug exporter-2 (TC 3.A.1.117) family.

Its subcellular location is the cell membrane. It catalyses the reaction ATP + H2O + xenobioticSide 1 = ADP + phosphate + xenobioticSide 2.. The protein is Multidrug resistance-like ATP-binding protein MdlA (mdlA) of Buchnera aphidicola subsp. Schizaphis graminum (strain Sg).